A 207-amino-acid chain; its full sequence is Recombination protein RecR (207 aa).

The segment at 60–75 (CRRCHNISDSGVCTIC) adopts a C4-type zinc-finger fold. A Toprim domain is found at 83–178 (STLCVVENIR…RVSVIARGIA (96 aa)).

It belongs to the RecR family.

Functionally, may play a role in DNA repair. It seems to be involved in an RecBC-independent recombinational process of DNA repair. It may act with RecF and RecO. This is Recombination protein RecR from Porphyromonas gingivalis (strain ATCC 33277 / DSM 20709 / CIP 103683 / JCM 12257 / NCTC 11834 / 2561).